Consider the following 257-residue polypeptide: Short chain dehydrogenase helC (257 aa).

An N-terminal signal peptide occupies residues 1–22; sequence MNTAIITGAAQGVGLCIAEALA. Residue valine 13 coordinates NADP(+). The N-linked (GlcNAc...) asparagine glycan is linked to asparagine 46. NADP(+) is bound by residues aspartate 60 and asparagine 87. Asparagine 110 carries an N-linked (GlcNAc...) asparagine glycan. Positions 154, 158, 185, and 187 each coordinate NADP(+). Tyrosine 154 functions as the Proton acceptor in the catalytic mechanism. The active-site Lowers pKa of active site Tyr is lysine 158.

This sequence belongs to the short-chain dehydrogenases/reductases (SDR) family.

Its pathway is mycotoxin biosynthesis. Short chain dehydrogenase; part of the gene cluster that mediates the biosynthesis of helvolic acid, an antibacterial nortriterpenoid. Protostadienol synthase helA cyclizes (3S)-oxidosqualene to (17Z)-protosta-17(20),24-dien-3-beta-ol (protostadienol). The synthesis of protostadienol is followed by several steps of monooxygenation, dehydrogenation, and acyl transfer to yield the final helvolic acid. Following the cyclization to the tetracyclic protostadienol by helA, cytochrome P450 monooxygenases helB1-mediated and helB2-mediated oxidation at C-4 and C-16, acyltransferase helD2-dependent acetylation of 16-OH, oxidation of C-21 by cytochrome P450 monooxygenase helB4, and short chain dehydrogenase helC-dependent oxidative decarboxylation yield the fusidane skeleton. This intermediate is further modified in three additional steps mediated by the cytochrome P450 monooxygenase helB3, the acyltransferase helD1, and the 3-ketosteroid 1-dehydrogenase helE to give helvolic acid. Compared with the late stages in the biosynthesis of helvolic acid, enzymes involved in the early stage modifications act in a relatively strict order. The hydroxylation of C-16 by helB1 and subsequent acetylation by helD2 should occur before the helB3-mediated oxidation of C-21. C-4 demethylation in fusidane-type antibiotics proceeds in an unusual manner though it is also achieved by oxidative decarboxylation. The methyl group at C-4 beta position is oxidized by helB1 and subsequently removed by the short chain dehydrogenase helC. The sequence is that of Short chain dehydrogenase helC from Aspergillus fumigatus (strain ATCC MYA-4609 / CBS 101355 / FGSC A1100 / Af293) (Neosartorya fumigata).